The chain runs to 1679 residues: Lysophospholipase NTE1 (1679 aa).

Low complexity predominate over residues 1-20 (MRSMNCTTNNTNNTGQNTKN). Residues 1 to 21 (MRSMNCTTNNTNNTGQNTKNS) form a disordered region. At 1-49 (MRSMNCTTNNTNNTGQNTKNSLGSSFNSSNYTSYRFQTCLTDQIISEAQ) the chain is on the cytoplasmic side. The helical transmembrane segment at 50 to 70 (TWSLSSLFNFSWVVSYFVMGA) threads the bilayer. Topologically, residues 71-103 (SRMIFRYGWYLATLSLLRIPKWIFFKLHHVQFT) are lumenal. Residues 104-124 (LSFWLILFALAVIVFVTYTIM) traverse the membrane as a helical segment. The Cytoplasmic portion of the chain corresponds to 125 to 1679 (KERILSQYKR…EFLLHRRNSI (1555 aa)). Residues 261–274 (SDKDHGDETDHSDT) are compositionally biased toward basic and acidic residues. The interval 261-304 (SDKDHGDETDHSDTDGLDDQDRDEEDEEEDDDIDNYDTKSCSSN) is disordered. Positions 275–295 (DGLDDQDRDEEDEEEDDDIDN) are enriched in acidic residues. Phosphoserine occurs at positions 300 and 312. 2 disordered regions span residues 498–527 (SSGSADLEPKPKNSNASSKLKKPPKAKPSD) and 586–672 (DILS…VSPR). Polar residues-rich tracts occupy residues 592 to 606 (PIHNNNRNKSNGINT) and 630 to 652 (FSSLSPELRNAQLSTSPLSLDNT). A phosphoserine mark is found at Ser-632, Ser-634, Ser-653, Ser-661, Ser-670, Ser-680, and Ser-739. Positions 775-800 (KEYTISNKRHNKSKSQDKKKPRAYKE) are disordered. The segment covering 788-800 (KSQDKKKPRAYKE) has biased composition (basic and acidic residues). Phosphothreonine is present on Thr-803. A nucleoside 3',5'-cyclic phosphate-binding positions include 803–947 (TPNL…LTKL) and 943–1074 (SLTK…VAKK). The disordered stretch occupies residues 855-882 (SSSVVSSMSKPEQVSAQSSHKGENPHHT). Residues 862–873 (MSKPEQVSAQSS) are compositionally biased toward polar residues. Residues 1373 to 1537 (LVLGGGGARG…VDNLPVTEMR (165 aa)) enclose the PNPLA domain. A GXGXXG motif is present at residues 1377 to 1382 (GGGARG). The GXSXG signature appears at 1404–1408 (GTSIG). The active-site Nucleophile is the Ser-1406. The active-site Proton acceptor is the Asp-1524. The DGA/G signature appears at 1524 to 1526 (DGG).

It belongs to the NTE family.

It is found in the endoplasmic reticulum membrane. Its subcellular location is the lipid droplet. It carries out the reaction a 1-acyl-sn-glycero-3-phosphocholine + H2O = sn-glycerol 3-phosphocholine + a fatty acid + H(+). It catalyses the reaction a 1,2-diacyl-sn-glycero-3-phosphocholine + 2 H2O = sn-glycerol 3-phosphocholine + 2 a carboxylate + 2 H(+). Positively regulated by SEC14. Inhibited by organophosphorus esters in the order phenyl saligenin phosphate (PSP) &gt; phenyldipentyl phosphinate (PDPP) = diisopropyl fluorophosphate (DFP) &gt; and paraoxon (PXN). In terms of biological role, intracellular phospholipase B that catalyzes the double deacylation of phosphatidylcholine (PC) to glycerophosphocholine (GroPCho). Plays an important role in membrane lipid homeostasis. Responsible for the rapid PC turnover in response to inositol, elevated temperatures, or when choline is present in the growth medium. NTE1 activity impacts the repressing transcriptional activity of OPI1, the main regulator of phospholipid synthesis gene transcription. The polypeptide is Lysophospholipase NTE1 (NTE1) (Saccharomyces cerevisiae (strain ATCC 204508 / S288c) (Baker's yeast)).